Consider the following 314-residue polypeptide: Ribosomal RNA small subunit methyltransferase H (314 aa).

S-adenosyl-L-methionine is bound by residues 34–36 (GGH), Asp53, Phe82, Asp103, and Gln110.

It belongs to the methyltransferase superfamily. RsmH family.

The protein localises to the cytoplasm. It catalyses the reaction cytidine(1402) in 16S rRNA + S-adenosyl-L-methionine = N(4)-methylcytidine(1402) in 16S rRNA + S-adenosyl-L-homocysteine + H(+). Specifically methylates the N4 position of cytidine in position 1402 (C1402) of 16S rRNA. This is Ribosomal RNA small subunit methyltransferase H from Levilactobacillus brevis (strain ATCC 367 / BCRC 12310 / CIP 105137 / JCM 1170 / LMG 11437 / NCIMB 947 / NCTC 947) (Lactobacillus brevis).